Consider the following 454-residue polypeptide: MVDLVSSLPDDLLGHILSLLTTKEAALTSILSKRWRYLIAFVPYLEFDDSAFLNPEEGKQTREGTRQSFIDFVDRVLALHGDSPIRKFSLKCKTGVDLDLLNQWICNVLQRGVLLIDLSMDLGHRCMFIEIFMSRTLVELKLGSGCRIAFGPEHISALPMLKTLTLDSVSWSDSGQLERLLSACPALEALNLANVHGSYPNATVSIASLKTLTIKSVSLSGPAHVFSFDTPNLLCLNYTALFEDDYPLVNLEYLVEAQIKFVLTDRLIKLVSVRKNGLLMLSEVQKLIRGISSVRKLYLSPGTLQVLGQCSQAMPVFNNLTFLVIESSMDIRWQAMPVLLKNCPRLETLVIKGGLVHCVAADCGDACTCISREEKGRSLASCPVKRLEIREFQGTLREMEMIKHFYYCFLCLKEMEIYVKDGRPQFLAPLASDSNPFKHLLGRNVIIKVHGSLT.

Residues 2-48 (VDLVSSLPDDLLGHILSLLTTKEAALTSILSKRWRYLIAFVPYLEFD) enclose the F-box domain. LRR repeat units follow at residues 77–102 (LALHGDSPIRKFSLKCKTGVDLDLLN), 144–168 (SGCRIAFGPEHISALPMLKTLTLDS), 169–194 (VSWSDSGQLERLLSACPALEALNLAN), 214–240 (IKSVSLSGPAHVFSFDTPNLLCLNYTA), 270–301 (LVSVRKNGLLMLSEVQKLIRGISSVRKLYLSP), 303–327 (TLQVLGQCSQAMPVFNNLTFLVIES), and 328–353 (SMDIRWQAMPVLLKNCPRLETLVIKG).

The polypeptide is Putative F-box/LRR-repeat protein At3g58880 (Arabidopsis thaliana (Mouse-ear cress)).